The sequence spans 735 residues: Muskelin (735 aa).

Residue alanine 2 is modified to N-acetylalanine. Residues 172 to 204 enclose the LisH domain; sequence REQEAIRLCLKHFRQHNYTEAFESLQKKTKIAL. In terms of domain architecture, CTLH spans 206–258; it reads HPMLTDIHDKLVLKGDFDACEELIEKAVNDGLFNQYISQQEYKPRWSQIIPKS. Kelch repeat units lie at residues 284–330, 339–391, 408–458, 469–515, 526–578, and 597–651; these read TVYL…SCHK, QIYT…FDHQ, ILTC…SRIG, CLYV…TGFT, EIHV…SLQE, and VHYL…AQVD.

Homodimer; may form higher oligomers. Identified in the CTLH complex that contains GID4, RANBP9 and/or RANBP10, MKLN1, MAEA, RMND5A (or alternatively its paralog RMND5B), GID8, ARMC8, WDR26 and YPEL5. Within this complex, MAEA, RMND5A (or alternatively its paralog RMND5B), GID8, WDR26, and RANBP9 and/or RANBP10 form the catalytic core, while GID4, MKLN1, ARMC8 and YPEL5 have ancillary roles. Interacts with RANBP9. Part of a complex consisting of RANBP9, MKLN1 and GID8. Interacts with GABRA1. Interacts with the C-terminal tail of PTGER3.

It is found in the cytoplasm. Its subcellular location is the cytosol. The protein localises to the nucleus. The protein resides in the nucleoplasm. It localises to the cell projection. It is found in the ruffle. Its subcellular location is the cell cortex. The protein localises to the synapse. The protein resides in the postsynapse. In terms of biological role, component of the CTLH E3 ubiquitin-protein ligase complex that selectively accepts ubiquitin from UBE2H and mediates ubiquitination and subsequent proteasomal degradation of the transcription factor HBP1. Required for internalization of the GABA receptor GABRA1 from the cell membrane via endosomes and subsequent GABRA1 degradation. Acts as a mediator of cell spreading and cytoskeletal responses to the extracellular matrix component THBS1. The protein is Muskelin (MKLN1) of Homo sapiens (Human).